We begin with the raw amino-acid sequence, 435 residues long: MPAAQPSGFVATLLSSPQAGEEAWWQQVARLGTPLVEAQDSGRVRMTFLWRDPDGDERYSAIRRVYADINGVTDHHSTDPQSLERLPGTDVWHWSMAIEHDWRGSYSLIPIVAAQLPPVFSDDGQLRDEQQREWWCSLFPCAIADPLNRDQSWGEQLSAAHMPAAPSQQAWRAVDNGTALPPDAARLTVLDWKSEQLDNQRRIWLYTTGISDEPAQRPLCIVLDGQKWAEETPLFAALEAETAAGHLPPAVWLFIDAIDGETRCRELPCDAAFWLAVQDELLPQAARLAPFSDDPDRTVVSGQSYGGLAALYAGLHWPQRFGRVLTQSGSFWWPNLQFITDFDQRDTLEPGVLVTEVRQGGQTAWPLVIFQEAGRREADIAFVNQQMHEALVAAGHQVHQRVYAGGHDTLCWRGGLIDGFRWLLTGDDPQAASRD.

Belongs to the Fes family.

The protein localises to the cytoplasm. The catalysed reaction is Fe(III)-enterobactin + 3 H2O + H(+) = Fe(III)-[N-(2,3-dihydroxybenzoyl)-L-serine] + 2 N-(2,3-dihydroxybenzoyl)-L-serine. It carries out the reaction Fe(III)-enterobactin + H2O = Fe(III)-[N-(2,3-dihydroxybenzoyl)-L-serine]3 + H(+). It catalyses the reaction Fe(III)-[N-(2,3-dihydroxybenzoyl)-L-serine]3 + H2O + H(+) = Fe(III)-[N-(2,3-dihydroxybenzoyl)-L-serine]2 + N-(2,3-dihydroxybenzoyl)-L-serine. The enzyme catalyses Fe(III)-[N-(2,3-dihydroxybenzoyl)-L-serine]2 + H2O + H(+) = Fe(III)-[N-(2,3-dihydroxybenzoyl)-L-serine] + N-(2,3-dihydroxybenzoyl)-L-serine. In terms of biological role, catalyzes the hydrolysis of ferric enterobactin (Fe-Ent). Is responsible for the release of iron from ferric enterobactin. This is Iron(III) enterobactin esterase (fes) from Dickeya dadantii (strain 3937) (Erwinia chrysanthemi (strain 3937)).